Consider the following 304-residue polypeptide: Ornithine carbamoyltransferase (304 aa).

Carbamoyl phosphate contacts are provided by residues 51–54, Q78, R102, and 129–132; these read STRT and HPVQ. L-ornithine contacts are provided by residues N157, D221, and 225 to 226; that span reads SM. Carbamoyl phosphate is bound by residues 261 to 262 and R289; that span reads CL.

It belongs to the aspartate/ornithine carbamoyltransferase superfamily. OTCase family.

It is found in the cytoplasm. The catalysed reaction is carbamoyl phosphate + L-ornithine = L-citrulline + phosphate + H(+). The protein operates within amino-acid degradation; L-arginine degradation via ADI pathway; carbamoyl phosphate from L-arginine: step 2/2. Reversibly catalyzes the transfer of the carbamoyl group from carbamoyl phosphate (CP) to the N(epsilon) atom of ornithine (ORN) to produce L-citrulline. The polypeptide is Ornithine carbamoyltransferase (Campylobacter curvus (strain 525.92)).